We begin with the raw amino-acid sequence, 285 residues long: Gap junction Cx32.2 protein (285 aa).

Residues 2 to 19 (GDLGFLSKLLDQVQSHST) lie on the Cytoplasmic side of the membrane. Residues 20 to 40 (VIGKIWMTVLFLFRIMVLGAG) traverse the membrane as a helical segment. At 41 to 76 (AESVWGDEQSDFTCNTQQPGCENVCYDWTFPISHIR) the chain is on the extracellular side. Residues 77–99 (FWVLQIIFVSTPTLIYLGHAMHI) traverse the membrane as a helical segment. The Cytoplasmic portion of the chain corresponds to 100-148 (IQQETKLRARLSSPGGSRLCKQPKYTNEQGKVKIKGNLLGSYLTQLVFK). A helical membrane pass occupies residues 149–171 (IIIEAAFIVGQYYLYGFIMVPMF). At 172–194 (PCSKKPCPFTVECYMSRPTEKTI) the chain is on the extracellular side. The helical transmembrane segment at 195-217 (FIIFMLVVACVSLLLNVIEVFYL) threads the bilayer. The Cytoplasmic segment spans residues 218–285 (ICTRVRCGSR…AKEEKRLLSH (68 aa)). Residues 264–285 (ETSQSIGGSLDGAKEEKRLLSH) form a disordered region. A compositionally biased stretch (basic and acidic residues) spans 275-285 (GAKEEKRLLSH).

The protein belongs to the connexin family. Beta-type (group I) subfamily. As to quaternary structure, a connexon is composed of a hexamer of connexins.

It is found in the cell membrane. The protein resides in the cell junction. The protein localises to the gap junction. Functionally, one gap junction consists of a cluster of closely packed pairs of transmembrane channels, the connexons, through which materials of low MW diffuse from one cell to a neighboring cell. May be involved in ovarian follicular maturation. This chain is Gap junction Cx32.2 protein, found in Micropogonias undulatus (Atlantic croaker).